The sequence spans 66 residues: Large ribosomal subunit protein bL35 (66 aa).

Residues 1-16 (MPKMKTHRGAAKRVKR) show a composition bias toward basic residues. A disordered region spans residues 1–28 (MPKMKTHRGAAKRVKRTGSGQLKRSRAF).

It belongs to the bacterial ribosomal protein bL35 family.

This Staphylococcus epidermidis (strain ATCC 35984 / DSM 28319 / BCRC 17069 / CCUG 31568 / BM 3577 / RP62A) protein is Large ribosomal subunit protein bL35.